The primary structure comprises 122 residues: uncharacterized protein (122 aa).

The residue at position 55 (Thr-55) is a Phosphothreonine. Phosphoserine is present on residues Ser-72, Ser-86, Ser-96, Ser-112, and Ser-118.

It is found in the cytoplasm. This is an uncharacterized protein from Homo sapiens (Human).